The primary structure comprises 192 residues: UPF0149 protein YPO0911/y3298/YP_3608 (192 aa).

It belongs to the UPF0149 family.

The protein is UPF0149 protein YPO0911/y3298/YP_3608 of Yersinia pestis.